The sequence spans 207 residues: Acyl-homoserine-lactone synthase (207 aa).

This sequence belongs to the autoinducer synthase family.

The enzyme catalyses a fatty acyl-[ACP] + S-adenosyl-L-methionine = an N-acyl-L-homoserine lactone + S-methyl-5'-thioadenosine + holo-[ACP] + H(+). Its function is as follows. Required for the synthesis of N-butanoyl-L-homoserine lactone (BHL), an autoinducer molecule which binds to AhyR. The sequence is that of Acyl-homoserine-lactone synthase (ahyI) from Aeromonas hydrophila.